Reading from the N-terminus, the 273-residue chain is Large ribosomal subunit protein uL2 (273 aa).

Disordered regions lie at residues 28–53 (KPFA…TTRH) and 221–273 (RGTA…RRSK). Residues 39–48 (KSGGRNNNGR) show a composition bias toward low complexity.

Belongs to the universal ribosomal protein uL2 family. In terms of assembly, part of the 50S ribosomal subunit. Forms a bridge to the 30S subunit in the 70S ribosome.

In terms of biological role, one of the primary rRNA binding proteins. Required for association of the 30S and 50S subunits to form the 70S ribosome, for tRNA binding and peptide bond formation. It has been suggested to have peptidyltransferase activity; this is somewhat controversial. Makes several contacts with the 16S rRNA in the 70S ribosome. The sequence is that of Large ribosomal subunit protein uL2 from Salmonella agona (strain SL483).